The chain runs to 409 residues: tRNA(Met) cytidine acetate ligase (409 aa).

ATP-binding positions include 7–20, G102, N169, and R194; that span reads VVEY…HLHH.

This sequence belongs to the TmcAL family.

The protein localises to the cytoplasm. The enzyme catalyses cytidine(34) in elongator tRNA(Met) + acetate + ATP = N(4)-acetylcytidine(34) in elongator tRNA(Met) + AMP + diphosphate. Catalyzes the formation of N(4)-acetylcytidine (ac(4)C) at the wobble position of elongator tRNA(Met), using acetate and ATP as substrates. First activates an acetate ion to form acetyladenylate (Ac-AMP) and then transfers the acetyl group to tRNA to form ac(4)C34. The chain is tRNA(Met) cytidine acetate ligase from Clostridium botulinum (strain Loch Maree / Type A3).